We begin with the raw amino-acid sequence, 350 residues long: tRNA uridine(34) hydroxylase (350 aa).

Residues 146–240 enclose the Rhodanese domain; sequence DDPDAVFIDM…YARRAREQGL (95 aa). Cys-200 (cysteine persulfide intermediate) is an active-site residue. The segment covering 319–328 has biased composition (basic and acidic residues); the sequence is RRRRAGRENG. The disordered stretch occupies residues 319–350; the sequence is RRRRAGRENGNKIFNKSRGRLNSKLSIPDPAE.

This sequence belongs to the TrhO family.

The enzyme catalyses uridine(34) in tRNA + AH2 + O2 = 5-hydroxyuridine(34) in tRNA + A + H2O. In terms of biological role, catalyzes oxygen-dependent 5-hydroxyuridine (ho5U) modification at position 34 in tRNAs. This Salmonella heidelberg (strain SL476) protein is tRNA uridine(34) hydroxylase.